A 203-amino-acid chain; its full sequence is Glycerol-3-phosphate acyltransferase (203 aa).

The next 4 helical transmembrane spans lie at 4 to 24, 80 to 100, 117 to 137, and 139 to 159; these read MAVTMTIIAYLLGSISSAVLI, PVLLGVIAIAACLGHMYPLFF, PIGLDLTGMIMATWLLVAILF, and YSSLAALVTVLLAPMYTWMIK.

This sequence belongs to the PlsY family. In terms of assembly, probably interacts with PlsX.

Its subcellular location is the cell inner membrane. The enzyme catalyses an acyl phosphate + sn-glycerol 3-phosphate = a 1-acyl-sn-glycero-3-phosphate + phosphate. It functions in the pathway lipid metabolism; phospholipid metabolism. In terms of biological role, catalyzes the transfer of an acyl group from acyl-phosphate (acyl-PO(4)) to glycerol-3-phosphate (G3P) to form lysophosphatidic acid (LPA). This enzyme utilizes acyl-phosphate as fatty acyl donor, but not acyl-CoA or acyl-ACP. The chain is Glycerol-3-phosphate acyltransferase from Vibrio vulnificus (strain YJ016).